We begin with the raw amino-acid sequence, 158 residues long: MLSGKDLGRAIEQAINKKIASGSVKSKAEVARHFKVQPPSIYDWIKKGSISKDKLPELWRFFSDVVGPEHWGLNEYPIPTPTNSDTKSELLDINNLYQAASDEIRAIVAFLLSGNATEPDWVDHDVRAYIAAMEMKVGKYLKALESERKSQNITKTGT.

Homooctamer.

In terms of biological role, transcriptional regulator that represses the expression of ydaS and ydaT under normal physiological conditions. It binds to its own upstream sequence and represses the adjacent and divergently coded ydaS-ydaT operon. RacR-mediated down-regulation of ydaS and ydaT may be critical for cell survival. RacR ensures that the prophage DNA is maintained in the genome. When the expression of the racR gene is reduced, the prophage Rac is excised from the genome, possibly to counteract the lethal toxicity of YdaT. The chain is DNA-binding transcriptional repressor RacR (racR) from Escherichia coli (strain K12).